A 334-amino-acid chain; its full sequence is Phosphate acyltransferase (334 aa).

The protein belongs to the PlsX family. As to quaternary structure, homodimer. Probably interacts with PlsY.

Its subcellular location is the cytoplasm. It catalyses the reaction a fatty acyl-[ACP] + phosphate = an acyl phosphate + holo-[ACP]. It participates in lipid metabolism; phospholipid metabolism. Its function is as follows. Catalyzes the reversible formation of acyl-phosphate (acyl-PO(4)) from acyl-[acyl-carrier-protein] (acyl-ACP). This enzyme utilizes acyl-ACP as fatty acyl donor, but not acyl-CoA. The polypeptide is Phosphate acyltransferase (Acholeplasma laidlawii (strain PG-8A)).